The following is a 378-amino-acid chain: Valine--tRNA ligase (378 aa).

The stretch at Ala-307–Ala-377 forms a coiled coil.

It belongs to the class-I aminoacyl-tRNA synthetase family. ValS type 1 subfamily. In terms of assembly, monomer.

It localises to the cytoplasm. It carries out the reaction tRNA(Val) + L-valine + ATP = L-valyl-tRNA(Val) + AMP + diphosphate. In terms of biological role, catalyzes the attachment of valine to tRNA(Val). As ValRS can inadvertently accommodate and process structurally similar amino acids such as threonine, to avoid such errors, it has a 'posttransfer' editing activity that hydrolyzes mischarged Thr-tRNA(Val) in a tRNA-dependent manner. The protein is Valine--tRNA ligase (valS) of Haemophilus parainfluenzae.